The chain runs to 230 residues: 7-cyano-7-deazaguanine synthase (230 aa).

ATP is bound at residue Ile9–Leu19. Zn(2+)-binding residues include Cys192, Cys202, Cys205, and Cys208.

The protein belongs to the QueC family. The cofactor is Zn(2+).

The enzyme catalyses 7-carboxy-7-deazaguanine + NH4(+) + ATP = 7-cyano-7-deazaguanine + ADP + phosphate + H2O + H(+). The protein operates within purine metabolism; 7-cyano-7-deazaguanine biosynthesis. In terms of biological role, catalyzes the ATP-dependent conversion of 7-carboxy-7-deazaguanine (CDG) to 7-cyano-7-deazaguanine (preQ(0)). The polypeptide is 7-cyano-7-deazaguanine synthase (Myxococcus xanthus (strain DK1622)).